We begin with the raw amino-acid sequence, 497 residues long: Putative diacyglycerol O-acyltransferase MT3584 (497 aa).

The active-site Proton acceptor is H143.

It belongs to the long-chain O-acyltransferase family.

It carries out the reaction an acyl-CoA + a 1,2-diacyl-sn-glycerol = a triacyl-sn-glycerol + CoA. Its pathway is glycerolipid metabolism; triacylglycerol biosynthesis. The polypeptide is Putative diacyglycerol O-acyltransferase MT3584 (Mycobacterium tuberculosis (strain CDC 1551 / Oshkosh)).